We begin with the raw amino-acid sequence, 359 residues long: Pyruvate dehydrogenase E1 component subunit beta, mitochondrial (359 aa).

The N-terminal 30 residues, 1-30, are a transit peptide targeting the mitochondrion; that stretch reads MAVVAVLVRKPLEQVSGLLRRRFHRTAPAA. Phosphotyrosine is present on Tyr-67. Glu-89 contributes to the thiamine diphosphate binding site. The K(+) site is built by Ile-142, Ala-190, Ile-191, Asp-193, and Asn-195. The residue at position 354 (Lys-354) is an N6-acetyllysine.

Heterotetramer of two PDHA1 and two PDHB subunits. The heterotetramer interacts with DLAT, and is part of the multimeric pyruvate dehydrogenase complex that contains multiple copies of pyruvate dehydrogenase (E1), dihydrolipoamide acetyltransferase (DLAT, E2) and lipoamide dehydrogenase (DLD, E3). These subunits are bound to an inner core composed of about 48 DLAT and 12 PDHX molecules. Interacts with DLAT. The cofactor is thiamine diphosphate.

It is found in the mitochondrion matrix. The catalysed reaction is N(6)-[(R)-lipoyl]-L-lysyl-[protein] + pyruvate + H(+) = N(6)-[(R)-S(8)-acetyldihydrolipoyl]-L-lysyl-[protein] + CO2. In terms of biological role, the pyruvate dehydrogenase complex catalyzes the overall conversion of pyruvate to acetyl-CoA and CO(2), and thereby links the glycolytic pathway to the tricarboxylic cycle. In Bos taurus (Bovine), this protein is Pyruvate dehydrogenase E1 component subunit beta, mitochondrial (PDHB).